Consider the following 1028-residue polypeptide: Isoleucine--tRNA ligase (1028 aa).

A 'HIGH' region motif is present at residues 51–61 (PTANGRPHIGH). The 'KMSKS' region signature appears at 591 to 595 (KMSKS). Lysine 594 is a binding site for ATP.

Belongs to the class-I aminoacyl-tRNA synthetase family. IleS type 2 subfamily. Monomer. The cofactor is Zn(2+).

It localises to the cytoplasm. The enzyme catalyses tRNA(Ile) + L-isoleucine + ATP = L-isoleucyl-tRNA(Ile) + AMP + diphosphate. Its function is as follows. Catalyzes the attachment of isoleucine to tRNA(Ile). As IleRS can inadvertently accommodate and process structurally similar amino acids such as valine, to avoid such errors it has two additional distinct tRNA(Ile)-dependent editing activities. One activity is designated as 'pretransfer' editing and involves the hydrolysis of activated Val-AMP. The other activity is designated 'posttransfer' editing and involves deacylation of mischarged Val-tRNA(Ile). The protein is Isoleucine--tRNA ligase of Thermoplasma volcanium (strain ATCC 51530 / DSM 4299 / JCM 9571 / NBRC 15438 / GSS1).